The sequence spans 519 residues: Glutamate--cysteine ligase (519 aa).

This sequence belongs to the glutamate--cysteine ligase type 1 family. Type 1 subfamily.

It carries out the reaction L-cysteine + L-glutamate + ATP = gamma-L-glutamyl-L-cysteine + ADP + phosphate + H(+). It functions in the pathway sulfur metabolism; glutathione biosynthesis; glutathione from L-cysteine and L-glutamate: step 1/2. The protein is Glutamate--cysteine ligase of Edwardsiella ictaluri (strain 93-146).